The primary structure comprises 398 residues: Succinate--CoA ligase [ADP-forming] subunit beta (398 aa).

In terms of domain architecture, ATP-grasp spans Lys9–Glu253. Residues Lys50, Gly57–Gly59, Val106, and Glu116 each bind ATP. The Mg(2+) site is built by Asn208 and Asp222. Substrate contacts are provided by residues Asn273 and Gly330 to Val332.

Belongs to the succinate/malate CoA ligase beta subunit family. Heterotetramer of two alpha and two beta subunits. It depends on Mg(2+) as a cofactor.

The enzyme catalyses succinate + ATP + CoA = succinyl-CoA + ADP + phosphate. It catalyses the reaction GTP + succinate + CoA = succinyl-CoA + GDP + phosphate. It participates in carbohydrate metabolism; tricarboxylic acid cycle; succinate from succinyl-CoA (ligase route): step 1/1. In terms of biological role, succinyl-CoA synthetase functions in the citric acid cycle (TCA), coupling the hydrolysis of succinyl-CoA to the synthesis of either ATP or GTP and thus represents the only step of substrate-level phosphorylation in the TCA. The beta subunit provides nucleotide specificity of the enzyme and binds the substrate succinate, while the binding sites for coenzyme A and phosphate are found in the alpha subunit. This Christiangramia forsetii (strain DSM 17595 / CGMCC 1.15422 / KT0803) (Gramella forsetii) protein is Succinate--CoA ligase [ADP-forming] subunit beta.